Here is a 451-residue protein sequence, read N- to C-terminus: UDP-glycosyltransferase 76E11 (451 aa).

Residues serine 273, 332-334 (APQ), 349-357 (HCGWNSTLE), and 371-374 (SSDQ) each bind UDP-alpha-D-glucose.

The protein belongs to the UDP-glycosyltransferase family.

Possesses low quercetin 3-O-glucosyltransferase and 7-O-glucosyltransferase activities in vitro. The protein is UDP-glycosyltransferase 76E11 (UGT76E11) of Arabidopsis thaliana (Mouse-ear cress).